Here is a 571-residue protein sequence, read N- to C-terminus: Glutamate--tRNA ligase (571 aa).

The short motif at 110–120 (PNPNGPGTLGS) is the 'HIGH' region element.

Belongs to the class-I aminoacyl-tRNA synthetase family. Glutamate--tRNA ligase type 2 subfamily.

It is found in the cytoplasm. It catalyses the reaction tRNA(Glu) + L-glutamate + ATP = L-glutamyl-tRNA(Glu) + AMP + diphosphate. Its function is as follows. Catalyzes the attachment of glutamate to tRNA(Glu) in a two-step reaction: glutamate is first activated by ATP to form Glu-AMP and then transferred to the acceptor end of tRNA(Glu). In Methanosarcina acetivorans (strain ATCC 35395 / DSM 2834 / JCM 12185 / C2A), this protein is Glutamate--tRNA ligase.